Here is a 554-residue protein sequence, read N- to C-terminus: MERLCWGWWWHLGILCLMHWAAGDTGSKTKSCSEVKQVYLAKGFSLNGAPQSEISGEHLRICPQGYTCCTSEMEENFANISRVEFEAKLRESSASIQRLLTTQHRNFDSYFQDLLNTSERVLQERFPSQYGDLYSQNSKIFRDLYSELRQYYRGSGINLEEALIEFWSRLLERVFKAQHTQYSFSEEYMDCLVKQYEQLKPFGDTPREVKLKAARAFIAARSFVQGLNAAADVVRKANQVPMSTECARAVMKLVYCPHCRGHSSIKLCSNYCWNVMRGCLANQADLDSEWRNLIESLLLVADKFNGASNVENIVGAIHTKISEAITHMQENKELLTNKVFKICGTPKKTNKGSKSEERRRKGKATQEDKSAVATMDNLISDVKGILSDIQDYWVSLPSLFCTEKVTAGPGNEDKCWNGITKGRYMPEPMGSGLANQINNPEVDVDITKPDMTIRQQIMQLKIMTSRLRNAYNGNDVDFQDTSDDMSGSGSGDGCNEDLCGSGRKLSRETVIIQPATHAVPRQPNPGETGKGTRLSSWDLLICLVALLVAQCTRW.

A signal peptide spans 1 to 21 (MERLCWGWWWHLGILCLMHWA). 7 cysteine pairs are disulfide-bonded: cysteine 32-cysteine 68, cysteine 62-cysteine 256, cysteine 69-cysteine 259, cysteine 191-cysteine 343, cysteine 246-cysteine 279, cysteine 268-cysteine 415, and cysteine 272-cysteine 401. N-linked (GlcNAc...) asparagine glycosylation is found at asparagine 79 and asparagine 116. The tract at residues 346-369 (PKKTNKGSKSEERRRKGKATQEDK) is disordered. The span at 353 to 369 (SKSEERRRKGKATQEDK) shows a compositional bias: basic and acidic residues. Residues serine 486, serine 488, and serine 490 are each glycosylated (O-linked (Xyl...) (heparan sulfate) serine).

This sequence belongs to the glypican family. In terms of processing, O-glycosylated with heparan sulfate side chains.

It localises to the cell membrane. The protein localises to the secreted. It is found in the extracellular space. Its function is as follows. Cell surface proteoglycan that bears heparan sulfate. The protein is Glypican-1 (gpc1) of Xenopus tropicalis (Western clawed frog).